Reading from the N-terminus, the 419-residue chain is Serine/threonine-protein kinase Kist (419 aa).

Residues 23–304 (WQVQSRLGSG…AEMALCSPFF (282 aa)) form the Protein kinase domain. Residues 29–37 (LGSGSSASV) and Lys-54 each bind ATP. Residues Asp-141 and Asp-158 each act as proton acceptor in the active site. Residues 324–406 (RLLNVLDDDY…KFVVATFYPL (83 aa)) enclose the RRM domain.

Belongs to the protein kinase superfamily. Ser/Thr protein kinase family. In terms of assembly, interacts with stathmin, PAM and CDKN1B/p27Kip1.

It localises to the nucleus. The catalysed reaction is L-seryl-[protein] + ATP = O-phospho-L-seryl-[protein] + ADP + H(+). The enzyme catalyses L-threonyl-[protein] + ATP = O-phospho-L-threonyl-[protein] + ADP + H(+). Its function is as follows. Upon serum stimulation, phosphorylates CDKN1B/p27Kip1, thus controlling CDKN1B subcellular location and cell cycle progression in G1 phase. May be involved in trafficking and/or processing of RNA. This is Serine/threonine-protein kinase Kist (UHMK1) from Pongo abelii (Sumatran orangutan).